A 410-amino-acid chain; its full sequence is Caspase-1 (410 aa).

The CARD domain occupies 1–91 (MADKVLKGKR…HLAETLGLSS (91 aa)). Positions 1–119 (MADKVLKGKR…PLPASVNNMP (119 aa)) are excised as a propeptide. The segment covering 88–104 (GLSSSPQSGNSQNTTDS) has biased composition (polar residues). A disordered region spans residues 88-125 (GLSSSPQSGNSQNTTDSEVAFPPLPASVNNMPGPAEPE). Active-site residues include H235 and C284. Positions 297 to 322 (SPAAPMDSTSQMGSSLSQVGDNLEDD) are excised as a propeptide.

It belongs to the peptidase C14A family. In terms of assembly, heterotetramer that consists of two anti-parallel arranged heterodimers, each one formed by a 20 kDa (Caspase-1 subunit p20) and a 10 kDa (Caspase-1 subunit p10) subunit. May be a component of the inflammasome, a protein complex which also includes PYCARD, CARD8 and NLRP2 and whose function would be the activation of pro-inflammatory caspases. Component of the AIM2 PANoptosome complex, a multiprotein complex that drives inflammatory cell death (PANoptosis). Both the p10 and p20 subunits interact with MEFV. Interacts with CARD17P/INCA and CARD18. Interacts with SERPINB1; this interaction regulates CASP1 activity. Heterotetramer that consists of two anti-parallel arranged heterodimers, each one formed by a 20 kDa (Caspase-1 subunit p20) and a 10 kDa (Caspase-1 subunit p10) subunit. In terms of processing, the two subunits are derived from the precursor sequence by an autocatalytic mechanism. Post-translationally, ubiquitinated via 'Lys-11'-linked polyubiquitination. Deubiquitinated by USP8.

It localises to the cytoplasm. Its subcellular location is the cell membrane. It carries out the reaction Strict requirement for an Asp residue at position P1 and has a preferred cleavage sequence of Tyr-Val-Ala-Asp-|-.. Its function is as follows. Thiol protease involved in a variety of inflammatory processes by proteolytically cleaving other proteins, such as the precursors of the inflammatory cytokines interleukin-1 beta (IL1B) and interleukin 18 (IL18) as well as the pyroptosis inducer Gasdermin-D (GSDMD), into active mature peptides. Plays a key role in cell immunity as an inflammatory response initiator: once activated through formation of an inflammasome complex, it initiates a pro-inflammatory response through the cleavage of the two inflammatory cytokines IL1B and IL18, releasing the mature cytokines which are involved in a variety of inflammatory processes. Cleaves a tetrapeptide after an Asp residue at position P1. Also initiates pyroptosis, a programmed lytic cell death pathway, through cleavage of GSDMD. In contrast to cleavage of interleukin IL1B, recognition and cleavage of GSDMD is not strictly dependent on the consensus cleavage site but depends on an exosite interface on CASP1 that recognizes and binds the Gasdermin-D, C-terminal (GSDMD-CT) part. Cleaves and activates CASP7 in response to bacterial infection, promoting plasma membrane repair. Upon inflammasome activation, during DNA virus infection but not RNA virus challenge, controls antiviral immunity through the cleavage of CGAS, rendering it inactive. In apoptotic cells, cleaves SPHK2 which is released from cells and remains enzymatically active extracellularly. This Felis catus (Cat) protein is Caspase-1 (CASP1).